Here is a 463-residue protein sequence, read N- to C-terminus: MTTVQLQKTNQPPVKAPRGSYWITTFGCQMNKADSERMSGILEYMGYYPAEEELKADLVLYNTCTIRDSAEQKVYSYLGRQAIRKRSLPNLKIVVAGCLAQQEGESLLRRVPEIDLLMGPQHCNRLESLLNQVDSGQQVLATEEQFILEDITTPRRDSSFCGWVNIIYGCNERCTYCVVPSVRGKEQSRTPEAIKSEVEDLAKSGYKEITLLGQNIDAYGRDFQSQNKEASAQITLSYLLKYIHDIEGIERIRFATSHPRYFTKELIDTCSELPKVCEHFHIPFQSGSNKILKNMGRGYTIESYKNIINYIKSKIPKAAISGDAIVAFPGESETDYEQTLSLIDEIKFDHVNTAAYSPRPNTPAATWPRQLNEDIKVKRLREINSLVENIAKERNQRYKNTSQEILIENINPKDSFQLMGRTRTNRLTFFPRSLENGVENKLGELIKVKITDVRPFSLTAKLL.

An MTTase N-terminal domain is found at G19 to S135. 6 residues coordinate [4Fe-4S] cluster: C28, C64, C98, C170, C174, and C177. A Radical SAM core domain is found at R156–E393. Residues Q396–L463 form the TRAM domain.

It belongs to the methylthiotransferase family. MiaB subfamily. Monomer. It depends on [4Fe-4S] cluster as a cofactor.

It is found in the cytoplasm. It carries out the reaction N(6)-dimethylallyladenosine(37) in tRNA + (sulfur carrier)-SH + AH2 + 2 S-adenosyl-L-methionine = 2-methylsulfanyl-N(6)-dimethylallyladenosine(37) in tRNA + (sulfur carrier)-H + 5'-deoxyadenosine + L-methionine + A + S-adenosyl-L-homocysteine + 2 H(+). In terms of biological role, catalyzes the methylthiolation of N6-(dimethylallyl)adenosine (i(6)A), leading to the formation of 2-methylthio-N6-(dimethylallyl)adenosine (ms(2)i(6)A) at position 37 in tRNAs that read codons beginning with uridine. The polypeptide is tRNA-2-methylthio-N(6)-dimethylallyladenosine synthase (Prochlorococcus marinus (strain NATL1A)).